Here is a 367-residue protein sequence, read N- to C-terminus: Germination protease (367 aa).

Positions 1-15 (MKEPLDLSKYSIRTD) are excised as a propeptide.

The protein belongs to the peptidase A25 family. Homotetramer. Autoproteolytically processed. The inactive tetrameric zymogen termed p46 autoprocesses to a smaller form termed p41, which is active only during spore germination.

The catalysed reaction is Endopeptidase action with P4 Glu or Asp, P1 preferably Glu &gt; Asp, P1' hydrophobic and P2' Ala.. In terms of biological role, initiates the rapid degradation of small, acid-soluble proteins during spore germination. This is Germination protease from Bacillus cereus (strain B4264).